Consider the following 273-residue polypeptide: Putative pyruvate, phosphate dikinase regulatory protein (273 aa).

149–156 (GPSRTSKT) contributes to the ADP binding site.

The protein belongs to the pyruvate, phosphate/water dikinase regulatory protein family. PDRP subfamily.

It carries out the reaction N(tele)-phospho-L-histidyl/L-threonyl-[pyruvate, phosphate dikinase] + ADP = N(tele)-phospho-L-histidyl/O-phospho-L-threonyl-[pyruvate, phosphate dikinase] + AMP + H(+). The catalysed reaction is N(tele)-phospho-L-histidyl/O-phospho-L-threonyl-[pyruvate, phosphate dikinase] + phosphate + H(+) = N(tele)-phospho-L-histidyl/L-threonyl-[pyruvate, phosphate dikinase] + diphosphate. Its function is as follows. Bifunctional serine/threonine kinase and phosphorylase involved in the regulation of the pyruvate, phosphate dikinase (PPDK) by catalyzing its phosphorylation/dephosphorylation. This is Putative pyruvate, phosphate dikinase regulatory protein from Rickettsia rickettsii (strain Iowa).